The primary structure comprises 317 residues: Tyrosine--tRNA ligase (317 aa).

Tyr-33 is a binding site for L-tyrosine. A 'HIGH' region motif is present at residues 38–46; it reads PSGKIHMGH. The L-tyrosine site is built by Tyr-155, Gln-159, Asp-162, and Gln-177. The short motif at 211–215 is the 'KMSKS' region element; the sequence is KMASS. Residue Ser-214 participates in ATP binding.

Belongs to the class-I aminoacyl-tRNA synthetase family. TyrS type 3 subfamily. Homodimer.

It localises to the cytoplasm. It carries out the reaction tRNA(Tyr) + L-tyrosine + ATP = L-tyrosyl-tRNA(Tyr) + AMP + diphosphate + H(+). Functionally, catalyzes the attachment of tyrosine to tRNA(Tyr) in a two-step reaction: tyrosine is first activated by ATP to form Tyr-AMP and then transferred to the acceptor end of tRNA(Tyr). The polypeptide is Tyrosine--tRNA ligase (Methanosarcina mazei (strain ATCC BAA-159 / DSM 3647 / Goe1 / Go1 / JCM 11833 / OCM 88) (Methanosarcina frisia)).